A 1086-amino-acid chain; its full sequence is Lysine-specific demethylase 4B (1086 aa).

The 43-residue stretch at 15-57 (IMTFRPTMDEFRDFNRYVAYIESQGAHRAGLAKIIPPKEWKPR) folds into the JmjN domain. Tyrosine 133 serves as a coordination point for 2-oxoglutarate. Residues 146–309 (VAQWNIGNLR…YGKVATQCTC (164 aa)) enclose the JmjC domain. The Fe cation site is built by histidine 189 and glutamate 191. Residues asparagine 199 and lysine 207 each coordinate 2-oxoglutarate. 2 residues coordinate Zn(2+): cysteine 235 and histidine 241. A 2-oxoglutarate-binding site is contributed by lysine 242. Histidine 277 serves as a coordination point for Fe cation. Cysteine 307 and cysteine 309 together coordinate Zn(2+). Basic and acidic residues predominate over residues 379 to 395 (SRPWRKAEEERRREPTR). 2 disordered regions span residues 379-536 (SRPW…PPGA) and 575-624 (PMEL…LSVV). Over residues 401 to 410 (SHRRRSQPKK) the composition is skewed to basic residues. Acidic residues predominate over residues 441-450 (MPEDEEEEEL). Over residues 456 to 467 (HEAEGVEEDGRG) the composition is skewed to basic and acidic residues. Residues 468–480 (KPRPTKARNKKKT) show a composition bias toward basic residues. A compositionally biased stretch (low complexity) spans 512 to 522 (GPAMGPMAAEG). Residues 585-597 (QAQAGDSQGTTPF) show a composition bias toward polar residues. Lysine 599 is subject to N6-acetyllysine. Residues 719 to 777 (MCFTSSGENTEPLPANSYVGEDGTSPLISCAHCCLQVHASCYGVRPELAKEGWTCSRCA) form a PHD-type 1 zinc finger. The C2HC pre-PHD-type zinc-finger motif lies at 782-815 (TAECCLCNLRGGALQRTTEHRWIHVICAIAVPEV). A PHD-type 2 zinc finger spans residues 838–895 (LKCIYCRKRMKRVSGACIQCSYEHCSTSFHVTCAHAAGVLMEPDDWPYVVSITCLKHR). Tudor domains are found at residues 905 to 962 (RTVS…CLRL) and 963 to 1019 (GPPP…EELP). Positions 1024–1043 (SRLSLSTGTPQEPSFSGDDV) are disordered. A compositionally biased stretch (polar residues) spans 1026–1037 (LSLSTGTPQEPS).

This sequence belongs to the JHDM3 histone demethylase family. The cofactor is Fe(2+).

Its subcellular location is the nucleus. It carries out the reaction N(6),N(6),N(6)-trimethyl-L-lysyl(9)-[histone H3] + 2 2-oxoglutarate + 2 O2 = N(6)-methyl-L-lysyl(9)-[histone H3] + 2 formaldehyde + 2 succinate + 2 CO2. In terms of biological role, histone demethylase that specifically demethylates 'Lys-9' of histone H3, thereby playing a role in histone code. Does not demethylate histone H3 'Lys-4', H3 'Lys-27', H3 'Lys-36' nor H4 'Lys-20'. Only able to demethylate trimethylated H3 'Lys-9', with a weaker activity than KDM4A, KDM4C and KDM4D. Demethylation of Lys residue generates formaldehyde and succinate. Plays a critical role in the development of the central nervous system (CNS). The polypeptide is Lysine-specific demethylase 4B (Kdm4b) (Mus musculus (Mouse)).